The sequence spans 203 residues: Small ribosomal subunit protein uS4c (203 aa).

The disordered stretch occupies residues 19-43 (PGLTNKSPKAGSDLRKQPRSRKKSQ). Residues 89-152 (MRLDNILFRL…KSRTLIQNSL (64 aa)) form the S4 RNA-binding domain.

Belongs to the universal ribosomal protein uS4 family. Part of the 30S ribosomal subunit. Contacts protein S5. The interaction surface between S4 and S5 is involved in control of translational fidelity.

The protein localises to the plastid. The protein resides in the chloroplast. In terms of biological role, one of the primary rRNA binding proteins, it binds directly to 16S rRNA where it nucleates assembly of the body of the 30S subunit. Functionally, with S5 and S12 plays an important role in translational accuracy. This chain is Small ribosomal subunit protein uS4c (rps4), found in Jasminum nudiflorum (Winter jasmine).